The chain runs to 494 residues: Autocrine proliferation repressor protein A (494 aa).

A signal peptide spans methionine 1–serine 18. Residues asparagine 37, asparagine 153, and asparagine 302 are each glycosylated (N-linked (GlcNAc...) asparagine).

The protein belongs to the pqaA family. As to quaternary structure, interacts with cfaD.

The protein resides in the secreted. Its function is as follows. Inhibitor that slows proliferation of secreting cells (also known as chalone). May function by binding to cell surface receptors. Requires cfaD for activity. Overexpression slows proliferation. The protein is Autocrine proliferation repressor protein A (aprA) of Dictyostelium discoideum (Social amoeba).